The following is a 437-amino-acid chain: CCA-adding enzyme (437 aa).

Residues serine 50 and lysine 53 each contribute to the ATP site. Serine 50 and lysine 53 together coordinate CTP. Residues aspartate 61, aspartate 63, and aspartate 112 each contribute to the Mg(2+) site. ATP is bound by residues histidine 135, lysine 155, and tyrosine 164. The CTP site is built by histidine 135, lysine 155, and tyrosine 164.

This sequence belongs to the tRNA nucleotidyltransferase/poly(A) polymerase family. Archaeal CCA-adding enzyme subfamily. As to quaternary structure, homodimer. The cofactor is Mg(2+).

It catalyses the reaction a tRNA precursor + 2 CTP + ATP = a tRNA with a 3' CCA end + 3 diphosphate. The enzyme catalyses a tRNA with a 3' CCA end + 2 CTP + ATP = a tRNA with a 3' CCACCA end + 3 diphosphate. In terms of biological role, catalyzes the addition and repair of the essential 3'-terminal CCA sequence in tRNAs without using a nucleic acid template. Adds these three nucleotides in the order of C, C, and A to the tRNA nucleotide-73, using CTP and ATP as substrates and producing inorganic pyrophosphate. tRNA 3'-terminal CCA addition is required both for tRNA processing and repair. Also involved in tRNA surveillance by mediating tandem CCA addition to generate a CCACCA at the 3' terminus of unstable tRNAs. While stable tRNAs receive only 3'-terminal CCA, unstable tRNAs are marked with CCACCA and rapidly degraded. In Thermoplasma volcanium (strain ATCC 51530 / DSM 4299 / JCM 9571 / NBRC 15438 / GSS1), this protein is CCA-adding enzyme.